The sequence spans 170 residues: APRG1 tumor suppressor candidate (170 aa).

The chain crosses the membrane as a helical span at residues 150–170; that stretch reads IALALAGPGAILILELSWFLG.

Expressed at high levels in the pancreas and placenta. In terms of tissue distribution, expressed at high levels in the kidney.

It localises to the membrane. In Homo sapiens (Human), this protein is APRG1 tumor suppressor candidate.